A 541-amino-acid polypeptide reads, in one-letter code: Light-independent protochlorophyllide reductase subunit B (541 aa).

Aspartate 36 is a [4Fe-4S] cluster binding site. Aspartate 286 (proton donor) is an active-site residue. 421–422 is a substrate binding site; the sequence is GM.

The protein belongs to the ChlB/BchB/BchZ family. As to quaternary structure, protochlorophyllide reductase is composed of three subunits; BchL, BchN and BchB. Forms a heterotetramer of two BchB and two BchN subunits. Requires [4Fe-4S] cluster as cofactor.

It carries out the reaction chlorophyllide a + oxidized 2[4Fe-4S]-[ferredoxin] + 2 ADP + 2 phosphate = protochlorophyllide a + reduced 2[4Fe-4S]-[ferredoxin] + 2 ATP + 2 H2O. The protein operates within porphyrin-containing compound metabolism; bacteriochlorophyll biosynthesis (light-independent). In terms of biological role, component of the dark-operative protochlorophyllide reductase (DPOR) that uses Mg-ATP and reduced ferredoxin to reduce ring D of protochlorophyllide (Pchlide) to form chlorophyllide a (Chlide). This reaction is light-independent. The NB-protein (BchN-BchB) is the catalytic component of the complex. This is Light-independent protochlorophyllide reductase subunit B from Chloroflexus aurantiacus (strain ATCC 29364 / DSM 637 / Y-400-fl).